The chain runs to 326 residues: MGVQFGDFIPKNIISFEDLKGKKVAIDGMNALYQFLTSIRLRDGSPLRNRKGEITSAYNGVFYKTIHLLENDITPIWVFDGEPPKLKEKTRKVRREMKEKAELKMKEAIKKEDFEEAAKYAKRVSYLTPKMVENCKYLLSLMGIPYVEAPSEGEAQASYMAKKGDVWAVVSQDYDALLYGAPRVVRNLTTTKEMPELIELNEVLEDLRISLDDLIDIAIFMGTDYNPGGVKGIGFKRAYELVRSGVAKDVLKKEVEYYDEIKRIFKEPKVTDNYSLSLKLPDKEGIIKFLVDENDFNYDRVKKHVDKLYNLIANKTKQKTLDAWFK.

The segment at 1–98 is N-domain; it reads MGVQFGDFIP…KTRKVRREMK (98 aa). Positions 27, 80, 152, 154, 173, 175, and 224 each coordinate Mg(2+). Residues 116 to 245 are I-domain; it reads EAAKYAKRVS…KRAYELVRSG (130 aa). The interval 317 to 325 is interaction with PCNA; that stretch reads KQKTLDAWF.

Belongs to the XPG/RAD2 endonuclease family. FEN1 subfamily. Interacts with PCNA. PCNA stimulates the nuclease activity without altering cleavage specificity. Mg(2+) is required as a cofactor.

Functionally, structure-specific nuclease with 5'-flap endonuclease and 5'-3' exonuclease activities involved in DNA replication and repair. During DNA replication, cleaves the 5'-overhanging flap structure that is generated by displacement synthesis when DNA polymerase encounters the 5'-end of a downstream Okazaki fragment. Binds the unpaired 3'-DNA end and kinks the DNA to facilitate 5' cleavage specificity. Cleaves one nucleotide into the double-stranded DNA from the junction in flap DNA, leaving a nick for ligation. Also involved in the base excision repair (BER) pathway. Acts as a genome stabilization factor that prevents flaps from equilibrating into structures that lead to duplications and deletions. Also possesses 5'-3' exonuclease activity on nicked or gapped double-stranded DNA. The polypeptide is Flap endonuclease 1 (Methanocaldococcus jannaschii (strain ATCC 43067 / DSM 2661 / JAL-1 / JCM 10045 / NBRC 100440) (Methanococcus jannaschii)).